A 293-amino-acid chain; its full sequence is MEIALALKAVILGIVEGLTEFLPISSTGHLILAGQLLDFNDEKGKIFEIVIQFGAILAVCWEFRARIGNVVRGLRAEPLAQRFAANVVIASVPAIVLAFIFGKWIKAHLFNPISVALAFIVGGVVILLAEWRDARRGTVSHPQGNALLEAAKAGAPRIESVDDLNWRDALKVGLAQCFALVPGTSRSGATIIGGMLFGLSRQVATEFSFFLAIPVIFGATVYELYKARALLNGDDLGIFAVGFVFAFLSAFLCVRWLLRFVATHDFKPFAWYRIAFGIVVLLTAYSGLVSWHA.

8 helical membrane passes run 3-23 (IALA…EFLP), 43-63 (KGKI…CWEF), 85-105 (ANVV…GKWI), 109-129 (LFNP…ILLA), 178-198 (FALV…MLFG), 203-223 (VATE…TVYE), 238-258 (IFAV…RWLL), and 269-289 (FAWY…SGLV).

It belongs to the UppP family.

The protein resides in the cell inner membrane. It carries out the reaction di-trans,octa-cis-undecaprenyl diphosphate + H2O = di-trans,octa-cis-undecaprenyl phosphate + phosphate + H(+). Functionally, catalyzes the dephosphorylation of undecaprenyl diphosphate (UPP). Confers resistance to bacitracin. The sequence is that of Undecaprenyl-diphosphatase from Cupriavidus necator (strain ATCC 17699 / DSM 428 / KCTC 22496 / NCIMB 10442 / H16 / Stanier 337) (Ralstonia eutropha).